The following is a 181-amino-acid chain: ADP-ribosylation factor 1 (181 aa).

Gly2 carries the N-myristoyl glycine lipid modification. Residues 24-31 (GLDAAGKT), 126-129 (NKQD), and Ala160 contribute to the GTP site.

The protein belongs to the small GTPase superfamily. Arf family. May interact with GTPase RAB5b.

Its subcellular location is the golgi apparatus membrane. The enzyme catalyses GTP + H2O = GDP + phosphate + H(+). Alternates between an inactive GDP-bound form and an active GTP-bound form. Intrinsic GTPase activity is almost undetectable in vitro. Activated by a guanine nucleotide-exchange factor (GEF) and inactivated by GTPase-activating protein ARFGAP1. Functionally, small GTPase involved in protein trafficking between different compartments. Modulates vesicle budding and uncoating within the Golgi complex. In its GTP-bound form, triggers the recruitment of coatomer proteins to the Golgi membrane. The hydrolysis of ARF1-bound GTP, which is mediated by ARFGAPs proteins, is required for dissociation of coat proteins from Golgi membranes and vesicles. Regulates the transport of N-acylated AK2 to the parasitophorous vacuole membrane. May be involved in the activation of lipid kinase PIP5K. The protein is ADP-ribosylation factor 1 (ARF1) of Plasmodium falciparum (isolate NF54).